The sequence spans 218 residues: Peroxiredoxin-like 2A (218 aa).

The segment at 3-101 (MWSIGVGAVG…DELGVPLYAV (99 aa)) is thioredoxin-like fold. Catalysis depends on redox-active residues Cys-74 and Cys-77.

It belongs to the peroxiredoxin-like PRXL2 family. PRXL2A subfamily. In terms of tissue distribution, expressed in kidney, liver, skin, and brain. Widely expressed with highest levels detected in adipose tissue.

The protein resides in the cytoplasm. It localises to the secreted. Its function is as follows. Involved in redox regulation of the cell. Acts as an antioxidant. Inhibits TNFSF11-induced NFKB1 and JUN activation and osteoclast differentiation. May affect bone resorption and help to maintain bone mass. Acts as a negative regulator of macrophage-mediated inflammation by inhibiting macrophage production of inflammatory cytokines, probably through suppression of the MAPK signaling pathway. The polypeptide is Peroxiredoxin-like 2A (Prxl2a) (Mus musculus (Mouse)).